Consider the following 269-residue polypeptide: MNTVPRYAVFGNPVAHSKSPQIHRQFALQEGVEIEYERICADTGGFAQAVEAFFADGGRGANVTVPFKQEAFALSDEHSERALAAGAVNTLILLENGKIRGDNTDGIGLTDDISKRLGVELSGKTVLLLGAGGAVRGVIPVLKEYRPARIVIANRTHTKAAEMAAHFGIEAIPLDELEGGFDIIINGTSGGLSGQLPAVSPKVFEHCTLAYDMVYGEAAEPFLAFARQSGAKQTADGLGMLVGQAAASYRLWRGFAPDVLPVVQYMREL.

Residues 17-19 (SKS) and T64 each bind shikimate. K68 functions as the Proton acceptor in the catalytic mechanism. E80 provides a ligand contact to NADP(+). Residues N89 and D105 each coordinate shikimate. NADP(+) is bound by residues 130 to 134 (GAGGA), 154 to 159 (NRTHTK), and M213. Y215 is a binding site for shikimate. An NADP(+)-binding site is contributed by G237.

This sequence belongs to the shikimate dehydrogenase family. In terms of assembly, homodimer.

The catalysed reaction is shikimate + NADP(+) = 3-dehydroshikimate + NADPH + H(+). Its pathway is metabolic intermediate biosynthesis; chorismate biosynthesis; chorismate from D-erythrose 4-phosphate and phosphoenolpyruvate: step 4/7. In terms of biological role, involved in the biosynthesis of the chorismate, which leads to the biosynthesis of aromatic amino acids. Catalyzes the reversible NADPH linked reduction of 3-dehydroshikimate (DHSA) to yield shikimate (SA). The sequence is that of Shikimate dehydrogenase (NADP(+)) from Neisseria mucosa.